We begin with the raw amino-acid sequence, 180 residues long: NADH-quinone oxidoreductase subunit I (180 aa).

4Fe-4S ferredoxin-type domains follow at residues 48 to 80 and 90 to 119; these read IVLT…LQKS and EFFR…LTPD. 8 residues coordinate [4Fe-4S] cluster: Cys60, Cys63, Cys66, Cys70, Cys99, Cys102, Cys105, and Cys109. The span at 161-174 shows a compositional bias: basic and acidic residues; that stretch reads KPKGDAENEAKPID. The segment at 161–180 is disordered; the sequence is KPKGDAENEAKPIDVKSLLP.

Belongs to the complex I 23 kDa subunit family. In terms of assembly, NDH-1 is composed of 14 different subunits. Subunits NuoA, H, J, K, L, M, N constitute the membrane sector of the complex. Requires [4Fe-4S] cluster as cofactor.

It localises to the cell inner membrane. It catalyses the reaction a quinone + NADH + 5 H(+)(in) = a quinol + NAD(+) + 4 H(+)(out). Functionally, NDH-1 shuttles electrons from NADH, via FMN and iron-sulfur (Fe-S) centers, to quinones in the respiratory chain. The immediate electron acceptor for the enzyme in this species is believed to be ubiquinone. Couples the redox reaction to proton translocation (for every two electrons transferred, four hydrogen ions are translocated across the cytoplasmic membrane), and thus conserves the redox energy in a proton gradient. In Aeromonas hydrophila subsp. hydrophila (strain ATCC 7966 / DSM 30187 / BCRC 13018 / CCUG 14551 / JCM 1027 / KCTC 2358 / NCIMB 9240 / NCTC 8049), this protein is NADH-quinone oxidoreductase subunit I.